The chain runs to 173 residues: NADH-ubiquinone oxidoreductase chain 6 (173 aa).

6 consecutive transmembrane segments (helical) span residues 1-21 (MTYFVLFLGLCFVLGGLAVAS), 27-47 (YGVVGLVLASIAGCGWLLSLG), 48-68 (VSFVSLVLFMVYLGGMLVVFV), 87-107 (VVGYGVSLITVLVVGVVVGGF), 113-133 (FGVITVDSVGMFSVRLDFGGV), and 139-159 (CGVGMFLVAGWGLLLTLFVVL).

It belongs to the complex I subunit 6 family.

Its subcellular location is the mitochondrion membrane. The catalysed reaction is a ubiquinone + NADH + 5 H(+)(in) = a ubiquinol + NAD(+) + 4 H(+)(out). In terms of biological role, core subunit of the mitochondrial membrane respiratory chain NADH dehydrogenase (Complex I) that is believed to belong to the minimal assembly required for catalysis. Complex I functions in the transfer of electrons from NADH to the respiratory chain. The immediate electron acceptor for the enzyme is believed to be ubiquinone. The sequence is that of NADH-ubiquinone oxidoreductase chain 6 (MT-ND6) from Alle alle (Dovekie).